The primary structure comprises 511 residues: MAFTSMVSTVPVLFFFFTLLLISANSSSLSHNIKVQEQDKDPFVGFNIGTDVSNLLSPTELVKFLQAQKVNHVRLYDADPELLKALAKTKVRVIISVPNNQLLAIGSSNSTAASWIGRNVVAYYPETLITAISVGDEVLTTVPSSAPLLLPAIESLYNALVASNLHTQIKVSTPHAASIMLDTFPPSQAYFNQTWHSIMVPLLQFLSKTGSPLMMNLYPYYVYMQNKGVVPLDNCLFEPLTPSKEMVDPNTLLHYTNVLDAMVDAAYVSMKNLNVSDVAVLVTESGWPSKGDSKEPYATIDNADTYNSNLIKHVFDRTGTPLHPEMTSSVYIYELFNEDLRAPPVSEASWGLFYGNSTPVYLLHVSGSGTFLANDTTNQTYCIAMDGVDAKTLQAALDWACGPGRSNCSEIQPGESCYQPNNVKGHASFAFNSYYQKEGRASGSCDFKGVAMITTTDPSHGSCIFPGSKKVGNRTQTVVNSTEVAAGEATSRSLSRGFCVTIMILVTFSIL.

Residues 1-28 (MAFTSMVSTVPVLFFFFTLLLISANSSS) form the signal peptide. Residue Asn109 is glycosylated (N-linked (GlcNAc...) asparagine). The active-site Proton donor is the Glu137. N-linked (GlcNAc...) asparagine glycans are attached at residues Asn192 and Asn274. Residue Glu284 is the Nucleophile of the active site. Residues Asn374, Asn378, Asn407, Asn473, and Asn480 are each glycosylated (N-linked (GlcNAc...) asparagine). Cysteines 382 and 445 form a disulfide. The GPI-anchor amidated alanine moiety is linked to residue Ala485. Residues 486 to 511 (AGEATSRSLSRGFCVTIMILVTFSIL) constitute a propeptide, removed in mature form.

This sequence belongs to the glycosyl hydrolase 17 family. Post-translationally, contains two additional disulfide bonds.

It is found in the cell membrane. The enzyme catalyses Hydrolysis of (1-&gt;3)-beta-D-glucosidic linkages in (1-&gt;3)-beta-D-glucans.. The sequence is that of Glucan endo-1,3-beta-glucosidase 1 from Arabidopsis thaliana (Mouse-ear cress).